Here is a 217-residue protein sequence, read N- to C-terminus: Eukaryotic translation initiation factor 4E (217 aa).

The segment at 1 to 27 is disordered; the sequence is MATVEPETTPTPNPPPAEEEKTESNQE. Position 2 is an N-acetylalanine (alanine 2). Threonine 22 carries the post-translational modification Phosphothreonine. The interval 37–40 is EIF4EBP1/2/3 binding; that stretch reads HPLQ. Residue 56–57 coordinates mRNA; it reads WQ. Positions 73-77 are EIF4EBP1/2/3 binding; sequence WALYN. An mRNA-binding site is contributed by 102–103; sequence WE. The tract at residues 132 to 139 is EIF4EBP1/2/3 binding; that stretch reads ETLLCLIG. Residues 157–162 and 205–207 contribute to the mRNA site; these read RAKGDK and TKS. Phosphoserine; by PKC and MKNK2 is present on serine 209.

Belongs to the eukaryotic initiation factor 4E family. In terms of assembly, eIF4F is a multi-subunit complex, the composition of which varies with external and internal environmental conditions. It is composed of at least EIF4A, EIF4E and EIF4G1/EIF4G3. EIF4E is also known to interact with other partners. Interacts with EIF4ENIF1/4E-T; promotes recruitment to P-bodies and import into the nucleus. Hypophosphorylated EIF4EBP1, EIF4EBP2 and EIF4EBP3 compete with EIF4G1/EIF4G3 to interact with EIF4E; insulin stimulated MAP-kinase (MAPK1 and MAPK3) phosphorylation of EIF4EBP1 causes dissociation of the complex allowing EIF4G1/EIF4G3 to bind and consequent initiation of translation. Interacts mutually exclusive with EIF4A1 or EIF4A2. Interacts with NGDN and PIWIL2. Component of the CYFIP1-EIF4E-FMR1 complex composed of CYFIP, EIF4E and FMR1. Interacts directly with CYFIP1. Interacts with CLOCK. Binds to MKNK2 in nucleus. Interacts with LIMD1, WTIP and AJUBA. Interacts with APOBEC3G in an RNA-dependent manner. Interacts with LARP1. Interacts with METTL3. Interacts with RBM24; this interaction prevents EIF4E from binding to p53/TP53 mRNA and inhibits the assembly of translation initiation complex. Interacts with DDX3X; interaction is direct and in an RNA-independent manner; this interaction enhances EIF4E cap-binding ability and is required for the repression of cap-dependent translation and the increase of IRES-mediated translation. DDX3X competes with EIF4G1 for interaction with EIF4E. Interacts with EIF4G1; which in a mutual exclusive interaction associates either with EIF1 or with EIF4E on a common binding site. Interacts with BTG4 and CNOT7. Interacts with LRPPRC (via N-terminus); the interaction promotes association of EIF4E with 4ESE-containing mRNAs. Interacts with mRNA cleavage enzyme CPSF3 and its cofactor CPSF1. Interacts (via RING-type zinc finger) with PML; the interaction results in conformational changes of both interacting proteins and reduces EIF4E affinity for the 5' m7G cap of mRNA, thus reducing EIF4E-mediated mRNA nuclear export. Interacts with homeobox protein HHEX/PRH; the interaction inhibits EIF4E-mediated mRNA nuclear export. Interacts with homeobox protein HOXA9; the interaction positively regulates EIF4E-mediated mRNA nuclear export. Interacts with homeobox protein EMX2. Post-translationally, phosphorylation increases the ability of the protein to bind to mRNA caps and to form the eIF4F complex. Phosphorylation also enhances its mRNA transport function. Phosphorylation at Ser-209 is not essential for protein synthesis.

The protein localises to the cytoplasm. It is found in the P-body. It localises to the stress granule. The protein resides in the nucleus. Its subcellular location is the nucleus speckle. The protein localises to the nuclear body. Its function is as follows. Acts in the cytoplasm to initiate and regulate protein synthesis and is required in the nucleus for export of a subset of mRNAs from the nucleus to the cytoplasm which promotes processes such as RNA capping, processing and splicing. Component of the protein complex eIF4F, which is involved in the recognition of the mRNA cap, ATP-dependent unwinding of 5'-terminal secondary structure and recruitment of mRNA to the ribosome. This protein recognizes and binds the 7-methylguanosine (m7G)-containing mRNA cap during an early step in the initiation of protein synthesis and facilitates ribosome binding by inducing the unwinding of the mRNAs secondary structures. Together with EIF4G1, antagonizes the scanning promoted by EIF1-EIF4G1 and is required for TISU translation, a process where the TISU element recognition makes scanning unnecessary. In addition to its role in translation initiation, also acts as a regulator of translation and stability in the cytoplasm. Component of the CYFIP1-EIF4E-FMR1 complex which binds to the mRNA cap and mediates translational repression: in the complex, EIF4E mediates the binding to the mRNA cap. Component of a multiprotein complex that sequesters and represses translation of proneurogenic factors during neurogenesis. In P-bodies, component of a complex that mediates the storage of translationally inactive mRNAs in the cytoplasm and prevents their degradation. May play an important role in spermatogenesis through translational regulation of stage-specific mRNAs during germ cell development. As well as its roles in translation, also involved in mRNA nucleocytoplasmic transport. Its role in mRNA export from the nucleus to the cytoplasm relies on its ability to bind the m7G cap of RNAs and on the presence of the 50-nucleotide EIF4E sensitivity element (4ESE) in the 3'UTR of sensitive transcripts. Interaction with the 4ESE is mediated by LRPPRC which binds simultaneously to both EIF4E and the 4ESE, thereby acting as a platform for assembly for the RNA export complex. EIF4E-dependent mRNA export is independent of ongoing protein or RNA synthesis and is also NFX1-independent but is XPO1-dependent with LRPPRC interacting with XPO1 to form an EIF4E-dependent mRNA export complex. Alters the composition of the cytoplasmic face of the nuclear pore to promote RNA export by reducing RANBP2 expression, relocalizing nucleoporin NUP214 and increasing expression of RANBP1 and RNA export factors DDX19 and GLE1. Promotes the nuclear export of cyclin CCND1 mRNA. Promotes the nuclear export of NOS2/iNOS mRNA. Promotes the nuclear export of MDM2 mRNA. Also promotes the export of additional mRNAs, including others involved in the cell cycle. In the nucleus, binds to capped splice factor-encoding mRNAs and stimulates their nuclear export to enhance splice factor production by increasing their cytoplasmic availability to the translation machinery. May also regulate splicing through interaction with the spliceosome in an RNA and m7G cap-dependent manner. Also binds to some pre-mRNAs and may play a role in their recruitment to the spliceosome. Promotes steady-state capping of a subset of coding and non-coding RNAs by mediating nuclear export of capping machinery mRNAs including RNMT, RNGTT and RAMAC to enhance their translation. Stimulates mRNA 3'-end processing by promoting the expression of several core cleavage complex factors required for mRNA cleavage and polyadenylation, and may also have a direct effect through its interaction with the CPSF3 cleavage enzyme. Rescues cells from apoptosis by promoting activation of serine/threonine-protein kinase AKT1 through mRNA export of NBS1 which potentiates AKT1 phosphorylation and also through mRNA export of AKT1 effectors, allowing for increased production of these proteins. This Oryctolagus cuniculus (Rabbit) protein is Eukaryotic translation initiation factor 4E (EIF4E).